Reading from the N-terminus, the 276-residue chain is Small ribosomal subunit protein uS2 (276 aa).

The protein belongs to the universal ribosomal protein uS2 family.

The protein is Small ribosomal subunit protein uS2 of Chlamydia caviae (strain ATCC VR-813 / DSM 19441 / 03DC25 / GPIC) (Chlamydophila caviae).